The following is a 366-amino-acid chain: Acetylserotonin O-methyltransferase 2 (366 aa).

4 residues coordinate S-adenosyl-L-homocysteine: Gly-209, Asp-232, Asp-253, and Lys-267. His-271 (proton acceptor) is an active-site residue. Active-site residues include Glu-302 and Glu-332.

Belongs to the class I-like SAM-binding methyltransferase superfamily. Cation-independent O-methyltransferase family. In terms of assembly, homodimer. In terms of tissue distribution, expressed in roots, leaves, stems and flowers.

Its subcellular location is the cytoplasm. The catalysed reaction is N-acetylserotonin + S-adenosyl-L-methionine = melatonin + S-adenosyl-L-homocysteine + H(+). The protein operates within aromatic compound metabolism; melatonin biosynthesis; melatonin from serotonin: step 1/2. In terms of biological role, methyltransferase which catalyzes the transfer of a methyl group onto N-acetylserotonin, producing melatonin (N-acetyl-5-methoxytryptamine). The polypeptide is Acetylserotonin O-methyltransferase 2 (Oryza sativa subsp. japonica (Rice)).